Reading from the N-terminus, the 130-residue chain is Small ribosomal subunit protein uS9 (130 aa).

It belongs to the universal ribosomal protein uS9 family.

This Bordetella parapertussis (strain 12822 / ATCC BAA-587 / NCTC 13253) protein is Small ribosomal subunit protein uS9.